A 600-amino-acid chain; its full sequence is Elongation factor 4 (600 aa).

Residues 5 to 187 enclose the tr-type G domain; sequence KYIRNFSIIA…AIVNKLPPPK (183 aa). GTP contacts are provided by residues 17 to 22 and 134 to 137; these read DHGKST and NKID.

The protein belongs to the TRAFAC class translation factor GTPase superfamily. Classic translation factor GTPase family. LepA subfamily.

The protein localises to the cell inner membrane. The catalysed reaction is GTP + H2O = GDP + phosphate + H(+). In terms of biological role, required for accurate and efficient protein synthesis under certain stress conditions. May act as a fidelity factor of the translation reaction, by catalyzing a one-codon backward translocation of tRNAs on improperly translocated ribosomes. Back-translocation proceeds from a post-translocation (POST) complex to a pre-translocation (PRE) complex, thus giving elongation factor G a second chance to translocate the tRNAs correctly. Binds to ribosomes in a GTP-dependent manner. The chain is Elongation factor 4 from Rickettsia canadensis (strain McKiel).